The chain runs to 133 residues: L-ectoine synthase (133 aa).

This sequence belongs to the ectoine synthase family.

It catalyses the reaction (2S)-4-acetamido-2-aminobutanoate = L-ectoine + H2O. The protein operates within amine and polyamine biosynthesis; ectoine biosynthesis; L-ectoine from L-aspartate 4-semialdehyde: step 3/3. Functionally, catalyzes the circularization of gamma-N-acetyl-alpha,gamma-diaminobutyric acid (ADABA) to ectoine (1,4,5,6-tetrahydro-2-methyl-4-pyrimidine carboxylic acid), which is an excellent osmoprotectant. The sequence is that of L-ectoine synthase from Bordetella petrii (strain ATCC BAA-461 / DSM 12804 / CCUG 43448).